The following is a 357-amino-acid chain: Phenylalanine--tRNA ligase alpha subunit (357 aa).

Mg(2+) is bound at residue Glu259.

The protein belongs to the class-II aminoacyl-tRNA synthetase family. Phe-tRNA synthetase alpha subunit type 1 subfamily. As to quaternary structure, tetramer of two alpha and two beta subunits. Mg(2+) is required as a cofactor.

Its subcellular location is the cytoplasm. The enzyme catalyses tRNA(Phe) + L-phenylalanine + ATP = L-phenylalanyl-tRNA(Phe) + AMP + diphosphate + H(+). This chain is Phenylalanine--tRNA ligase alpha subunit, found in Jannaschia sp. (strain CCS1).